We begin with the raw amino-acid sequence, 99 residues long: uncharacterized protein (99 aa).

2 disordered regions span residues 1–24 (MKATRRTRVASERGVRRRRRVRAT) and 49–99 (SVRT…RCAT). 2 stretches are compositionally biased toward basic residues: residues 15–24 (VRRRRRVRAT) and 71–81 (SRRRGRPRSSR).

This is an uncharacterized protein from Streptomyces fradiae (Streptomyces roseoflavus).